A 330-amino-acid polypeptide reads, in one-letter code: Glycerol-3-phosphate dehydrogenase [NAD(P)+] (330 aa).

NADPH is bound by residues Trp-11, Arg-33, and Lys-105. The sn-glycerol 3-phosphate site is built by Lys-105, Gly-133, and Ser-135. Position 137 (Ala-137) interacts with NADPH. Sn-glycerol 3-phosphate-binding residues include Lys-188, Asp-241, Ser-251, Arg-252, and Asn-253. The Proton acceptor role is filled by Lys-188. Arg-252 contacts NADPH. The NADPH site is built by Val-276 and Glu-278.

It belongs to the NAD-dependent glycerol-3-phosphate dehydrogenase family.

The protein localises to the cytoplasm. The catalysed reaction is sn-glycerol 3-phosphate + NAD(+) = dihydroxyacetone phosphate + NADH + H(+). It catalyses the reaction sn-glycerol 3-phosphate + NADP(+) = dihydroxyacetone phosphate + NADPH + H(+). The protein operates within membrane lipid metabolism; glycerophospholipid metabolism. Functionally, catalyzes the reduction of the glycolytic intermediate dihydroxyacetone phosphate (DHAP) to sn-glycerol 3-phosphate (G3P), the key precursor for phospholipid synthesis. The sequence is that of Glycerol-3-phosphate dehydrogenase [NAD(P)+] from Acidovorax sp. (strain JS42).